The chain runs to 81 residues: Elicitor peptide 4 (81 aa).

Residues 1–54 (MERGVSYYLWIPFKFIHQTFGSLLLKLLGLRSPSDHSFPEDGEEEVKVVEVSSR) constitute a propeptide that is removed on maturation. The disordered stretch occupies residues 57–81 (PGKKNVLKKSRESSGKPGGTNKKPF).

It belongs to the brassicaceae elicitor peptide family.

Its function is as follows. Elicitor of plant defense. This Arabidopsis thaliana (Mouse-ear cress) protein is Elicitor peptide 4 (PEP4).